A 476-amino-acid chain; its full sequence is Probable cytosolic Fe-S cluster assembly factor GJ13047 (476 aa).

The [4Fe-4S] cluster site is built by C23, C68, C71, C74, C187, C243, C395, and C399.

The protein belongs to the NARF family.

Functionally, component of the cytosolic iron-sulfur (Fe/S) protein assembly machinery. Required for maturation of extramitochondrial Fe/S proteins. The sequence is that of Probable cytosolic Fe-S cluster assembly factor GJ13047 from Drosophila virilis (Fruit fly).